We begin with the raw amino-acid sequence, 218 residues long: MFEGPLQDLIDEFSRLPGVGPKSAQRIAFHLLHVEPADITRLQDALGAIRDGVTFCRICCNISREEVCRICADSSRDRSTICVVEEPKDIQVIERTGEYTGRYHVLGGSLDPLANIGPRELNISQLLQRIGGVLPDRELADSTPETPLYDASPEVREVILATDPNTEGEATASYLARLLRDFPDLVVSRLASGMPLGGDLEFVDELTLSRALSGRLTL.

The C4-type zinc finger occupies 56 to 71 (CRICCNISREEVCRIC). In terms of domain architecture, Toprim spans 79–195 (STICVVEEPK…VVSRLASGMP (117 aa)).

This sequence belongs to the RecR family.

May play a role in DNA repair. It seems to be involved in an RecBC-independent recombinational process of DNA repair. It may act with RecF and RecO. The chain is Recombination protein RecR from Corynebacterium diphtheriae (strain ATCC 700971 / NCTC 13129 / Biotype gravis).